The sequence spans 365 residues: tRNA/tmRNA (uracil-C(5))-methyltransferase (365 aa).

Gln189, Tyr217, Asn222, Glu238, and Asp298 together coordinate S-adenosyl-L-methionine. The active-site Nucleophile is the Cys323. Catalysis depends on Glu357, which acts as the Proton acceptor.

The protein belongs to the class I-like SAM-binding methyltransferase superfamily. RNA M5U methyltransferase family. TrmA subfamily.

The enzyme catalyses uridine(54) in tRNA + S-adenosyl-L-methionine = 5-methyluridine(54) in tRNA + S-adenosyl-L-homocysteine + H(+). The catalysed reaction is uridine(341) in tmRNA + S-adenosyl-L-methionine = 5-methyluridine(341) in tmRNA + S-adenosyl-L-homocysteine + H(+). Dual-specificity methyltransferase that catalyzes the formation of 5-methyluridine at position 54 (m5U54) in all tRNAs, and that of position 341 (m5U341) in tmRNA (transfer-mRNA). In Shewanella halifaxensis (strain HAW-EB4), this protein is tRNA/tmRNA (uracil-C(5))-methyltransferase.